A 238-amino-acid chain; its full sequence is Cysteine-rich venom protein kaouthin-2 (238 aa).

The first 19 residues, 1-19, serve as a signal peptide directing secretion; the sequence is MIAFIVLLSLAAVLQQSSG. Positions 20–25 are excised as a propeptide; sequence TVDFAS. The SCP domain maps to 38-164; it reads VDKHNALRRS…SSKYLYVCQY (127 aa). Cystine bridges form between Cys75–Cys153, Cys92–Cys165, Cys148–Cys162, Cys184–Cys191, Cys187–Cys196, Cys200–Cys233, Cys209–Cys227, and Cys218–Cys231. Residues 200–233 form the ShKT domain; sequence CKHHNVFSNCQSLAKQNACQTEWMKSKCAASCFC.

As to expression, expressed by the venom gland.

The protein resides in the secreted. The chain is Cysteine-rich venom protein kaouthin-2 from Naja kaouthia (Monocled cobra).